A 72-amino-acid chain; its full sequence is MTKEDCIEMQGVVIDTLPNTMFRVQLDNKHIVTAHISGKMRKNYIRILTGDKVTLELTPYDLSKGRIIFRSR.

The S1-like domain maps to 1-72 (MTKEDCIEMQ…SKGRIIFRSR (72 aa)).

It belongs to the IF-1 family. In terms of assembly, component of the 30S ribosomal translation pre-initiation complex which assembles on the 30S ribosome in the order IF-2 and IF-3, IF-1 and N-formylmethionyl-tRNA(fMet); mRNA recruitment can occur at any time during PIC assembly.

The protein localises to the cytoplasm. In terms of biological role, one of the essential components for the initiation of protein synthesis. Stabilizes the binding of IF-2 and IF-3 on the 30S subunit to which N-formylmethionyl-tRNA(fMet) subsequently binds. Helps modulate mRNA selection, yielding the 30S pre-initiation complex (PIC). Upon addition of the 50S ribosomal subunit IF-1, IF-2 and IF-3 are released leaving the mature 70S translation initiation complex. This Buchnera aphidicola subsp. Baizongia pistaciae (strain Bp) protein is Translation initiation factor IF-1.